The sequence spans 208 residues: MPAFRYLIVLPLLCWGFASQAETTPQSRLKSFLDSARTLQADFTQVRLDESGRPRQESGGSFYLQRPGKFRWDYTKPYRQQIVSSGGKVWFYDVDLEQVTAKRLGQAVGSTPALLLSGEMALEDNFTIEDQGTEEGMYWIKLVPKSEEGGFRYVLIGLEGDKLAGMELSDNFGQLTRIYFANLRTGITLDPKLFQFSPPAGVDVFEDK.

Positions 1-21 (MPAFRYLIVLPLLCWGFASQA) are cleaved as a signal peptide.

It belongs to the LolA family. In terms of assembly, monomer.

The protein localises to the periplasm. In terms of biological role, participates in the translocation of lipoproteins from the inner membrane to the outer membrane. Only forms a complex with a lipoprotein if the residue after the N-terminal Cys is not an aspartate (The Asp acts as a targeting signal to indicate that the lipoprotein should stay in the inner membrane). The polypeptide is Outer-membrane lipoprotein carrier protein (Methylococcus capsulatus (strain ATCC 33009 / NCIMB 11132 / Bath)).